Reading from the N-terminus, the 250-residue chain is MAGLRVEVISLFPDMFAAISEYGITSRAVKQGLLQLNCWNPRSYTEDRHQTVDDRPFGGGPGMVMKIKPLELALADAKRAAGGKAKVIYLSPQGRQLKQADVRELANEEALILIAGRYEGIDERFIEAHVDEEWSIGDYVLSGGELPAMVLIDAVTRLLPGALGHAGSAEEDSFTDGLLDCPHYTRPEVYEGKCVPEVLLSGNHEHIRRWRLQQSLGRTWERRADLLDSRSLSGEEQKLLAEYIRQRNDS.

Residues glycine 116 and 136 to 141 each bind S-adenosyl-L-methionine; that span reads IGDYVL.

This sequence belongs to the RNA methyltransferase TrmD family. As to quaternary structure, homodimer.

It is found in the cytoplasm. It catalyses the reaction guanosine(37) in tRNA + S-adenosyl-L-methionine = N(1)-methylguanosine(37) in tRNA + S-adenosyl-L-homocysteine + H(+). Its function is as follows. Specifically methylates guanosine-37 in various tRNAs. This is tRNA (guanine-N(1)-)-methyltransferase from Stutzerimonas stutzeri (strain A1501) (Pseudomonas stutzeri).